The following is a 253-amino-acid chain: Serine/threonine-protein phosphatase 3 (253 aa).

The cofactor is Mn(2+). In terms of processing, phosphorylated by YegI.

It carries out the reaction O-phospho-L-seryl-[protein] + H2O = L-seryl-[protein] + phosphate. The enzyme catalyses O-phospho-L-threonyl-[protein] + H2O = L-threonyl-[protein] + phosphate. With respect to regulation, activity dramatically decreases in the presence of the general protein phosphatase inhibitor sodium phosphate. Slightly inhibited by sodium fluoride. Activity decreases in the presence of the metal chelator EDTA. Its function is as follows. PP2C-like phosphatase that can dephosphorylate YegI. In vitro, can hydrolyze p-nitrophenyl phosphate (pNPP) to p-nitrophenol. This Escherichia coli (strain K12) protein is Serine/threonine-protein phosphatase 3.